Reading from the N-terminus, the 356-residue chain is Phospho-N-acetylmuramoyl-pentapeptide-transferase (356 aa).

Helical transmembrane passes span 25-45 (TVAAMLTSGLIVFLFGPSIIA), 70-90 (GTPTMGGLMILTGIVVSAFLW), 93-113 (LSNIYFWVSLFVMLSFGMIGF), 138-158 (FLIAIIAAFVLLQVGSSGLAL), 164-184 (YFINLSWFFLPFSAFVIVGTG), 195-215 (GLAIVPVMVAALSFALIAYLS), 235-255 (LAVLLGAVVGAGLGFLWFNAP), 258-278 (AIFMGDTGSLALGGLLGIVAV), 284-304 (IVLALIGGLFVLEGFSVVIQV), and 333-353 (QVVIRFWIISIVLALVGLSTL).

The protein belongs to the glycosyltransferase 4 family. MraY subfamily. Mg(2+) is required as a cofactor.

Its subcellular location is the cell inner membrane. The enzyme catalyses UDP-N-acetyl-alpha-D-muramoyl-L-alanyl-gamma-D-glutamyl-meso-2,6-diaminopimeloyl-D-alanyl-D-alanine + di-trans,octa-cis-undecaprenyl phosphate = di-trans,octa-cis-undecaprenyl diphospho-N-acetyl-alpha-D-muramoyl-L-alanyl-D-glutamyl-meso-2,6-diaminopimeloyl-D-alanyl-D-alanine + UMP. The protein operates within cell wall biogenesis; peptidoglycan biosynthesis. Its function is as follows. Catalyzes the initial step of the lipid cycle reactions in the biosynthesis of the cell wall peptidoglycan: transfers peptidoglycan precursor phospho-MurNAc-pentapeptide from UDP-MurNAc-pentapeptide onto the lipid carrier undecaprenyl phosphate, yielding undecaprenyl-pyrophosphoryl-MurNAc-pentapeptide, known as lipid I. This chain is Phospho-N-acetylmuramoyl-pentapeptide-transferase, found in Bartonella quintana (strain Toulouse) (Rochalimaea quintana).